The primary structure comprises 804 residues: Cell surface sensor MSB2 (804 aa).

The first 20 residues, 1 to 20, serve as a signal peptide directing secretion; that stretch reads MHNFSKLAVAFVAAASFASA. At 21-694 the chain is on the extracellular side; it reads EPETKAKVER…TNQSATQRGT (674 aa). Asn-45 carries N-linked (GlcNAc...) asparagine glycosylation. 2 stretches are compositionally biased toward low complexity: residues 46-58 and 69-80; these read TTTP…SSTS and SSFSSSASSSSA. 2 disordered regions span residues 46–90 and 105–220; these read TTTP…RQPT and TDST…ATSN. The tract at residues 46–475 is serine/threonine rich region (STR); it reads TTTPASEASS…SVAPTSATSS (430 aa). Polar residues-rich tracts occupy residues 81 to 90 and 109 to 126; these read QELTASRQPT and PFSQ…SATG. Composition is skewed to low complexity over residues 128-143 and 150-169; these read VTPI…PSTA and SALT…SVTS. N-linked (GlcNAc...) asparagine glycosylation is present at Asn-157. Positions 170–188 are enriched in polar residues; sequence PGSTSGPAGTPESSSASDF. A compositionally biased stretch (low complexity) spans 189–202; sequence TSAVATSRASTATS. Residues Asn-298, Asn-308, Asn-357, and Asn-393 are each glycosylated (N-linked (GlcNAc...) asparagine). Residues 345-394 show a composition bias toward polar residues; sequence VQTLPPVSTPTANGTVTSPPVDSQTTVLPTTTPGLSSDTIVTSPGVTANS. Positions 345–516 are disordered; sequence VQTLPPVSTP…APTVLPSDLP (172 aa). Composition is skewed to low complexity over residues 395-407 and 427-476; these read TQVP…TIPT and NNTV…TSSA. N-linked (GlcNAc...) asparagine glycosylation is found at Asn-427 and Asn-433. The segment at 482–641 is HKR11-MSB2 homology domain (HMH); sequence WLPTTIIVQA…NGMLAHNLTM (160 aa). Positions 493–508 are enriched in polar residues; it reads LPSTTGSSTNAPSSAP. Residues Asn-629, Asn-638, Asn-669, Asn-683, and Asn-686 are each glycosylated (N-linked (GlcNAc...) asparagine). The disordered stretch occupies residues 658–689; sequence KPAGAGSGTGGNGSNGPNDVFNNDNNSTNQSA. Residues 660 to 671 are compositionally biased toward gly residues; sequence AGAGSGTGGNGS. Residues 672 to 686 are compositionally biased toward low complexity; that stretch reads NGPNDVFNNDNNSTN. A helical transmembrane segment spans residues 695 to 715; the sequence is VAGIAFGAVSLAAAYGAAMFI. Topologically, residues 716–804 are cytoplasmic; the sequence is VARRYKKKRQ…VAQENSLGWN (89 aa). 2 disordered regions span residues 724–748 and 762–804; these read RQAH…PALM and GVMG…LGWN. A compositionally biased stretch (polar residues) spans 731–744; the sequence is SSVATPSEMRQSGS. Low complexity predominate over residues 774-787; that stretch reads GSNGSGRSAGNSAR.

It belongs to the HKR1/MSB2 family.

It localises to the cell membrane. The protein resides in the vacuole membrane. MSB2 and SHO1 have overlapping functions in recognizing various surface signals for MAPK PMK1 activation and appressorium formation. While MSB2 is critical for sensing surface hydrophobicity and cutin monomers, SHO1 may play a more important role in recognizing rice leaf waxes. In Pyricularia oryzae (strain 70-15 / ATCC MYA-4617 / FGSC 8958) (Rice blast fungus), this protein is Cell surface sensor MSB2.